The chain runs to 307 residues: Probable porphobilinogen deaminase (307 aa).

Residue cysteine 240 is modified to S-(dipyrrolylmethanemethyl)cysteine.

The protein belongs to the HMBS family. The cofactor is dipyrromethane.

It carries out the reaction 4 porphobilinogen + H2O = hydroxymethylbilane + 4 NH4(+). It participates in porphyrin-containing compound metabolism; protoporphyrin-IX biosynthesis; coproporphyrinogen-III from 5-aminolevulinate: step 2/4. Tetrapolymerization of the monopyrrole PBG into the hydroxymethylbilane pre-uroporphyrinogen in several discrete steps. The protein is Probable porphobilinogen deaminase (hemC) of Aeropyrum pernix (strain ATCC 700893 / DSM 11879 / JCM 9820 / NBRC 100138 / K1).